Here is a 156-residue protein sequence, read N- to C-terminus: MPRKGHVQKREILPDPMYNSKLVTSLIDHLMIDGKRGTATKILYAAFDEIKNETGNDPVEVFQQAMENVMPVLEVKARRVGGSNYQVPIEVRPDRRTTLGLRWIVQYARLRGEHTMVERLAREIIDASNNTGASVKKREDTHRMAEANRAFAHYRW.

Belongs to the universal ribosomal protein uS7 family. Part of the 30S ribosomal subunit. Contacts proteins S9 and S11.

One of the primary rRNA binding proteins, it binds directly to 16S rRNA where it nucleates assembly of the head domain of the 30S subunit. Is located at the subunit interface close to the decoding center, probably blocks exit of the E-site tRNA. This chain is Small ribosomal subunit protein uS7, found in Limosilactobacillus reuteri (strain DSM 20016) (Lactobacillus reuteri).